Here is a 215-residue protein sequence, read N- to C-terminus: Guanylate kinase (215 aa).

The Guanylate kinase-like domain maps to 11–189; it reads GNVFMVVAPS…ALTELVQIIS (179 aa). 18–25 provides a ligand contact to ATP; the sequence is APSGAGKS.

Belongs to the guanylate kinase family.

It localises to the cytoplasm. It carries out the reaction GMP + ATP = GDP + ADP. Functionally, essential for recycling GMP and indirectly, cGMP. This is Guanylate kinase from Bordetella bronchiseptica (strain ATCC BAA-588 / NCTC 13252 / RB50) (Alcaligenes bronchisepticus).